Reading from the N-terminus, the 522-residue chain is Protein nucleotidyltransferase YdiU (522 aa).

The ATP site is built by glycine 109, glycine 111, arginine 112, lysine 132, aspartate 144, glycine 145, arginine 195, and arginine 202. The active-site Proton acceptor is the aspartate 271. Residues asparagine 272 and aspartate 281 each coordinate Mg(2+). Position 281 (aspartate 281) interacts with ATP.

The protein belongs to the SELO family. Mg(2+) serves as cofactor. Requires Mn(2+) as cofactor.

It carries out the reaction L-seryl-[protein] + ATP = 3-O-(5'-adenylyl)-L-seryl-[protein] + diphosphate. The catalysed reaction is L-threonyl-[protein] + ATP = 3-O-(5'-adenylyl)-L-threonyl-[protein] + diphosphate. The enzyme catalyses L-tyrosyl-[protein] + ATP = O-(5'-adenylyl)-L-tyrosyl-[protein] + diphosphate. It catalyses the reaction L-histidyl-[protein] + UTP = N(tele)-(5'-uridylyl)-L-histidyl-[protein] + diphosphate. It carries out the reaction L-seryl-[protein] + UTP = O-(5'-uridylyl)-L-seryl-[protein] + diphosphate. The catalysed reaction is L-tyrosyl-[protein] + UTP = O-(5'-uridylyl)-L-tyrosyl-[protein] + diphosphate. Nucleotidyltransferase involved in the post-translational modification of proteins. It can catalyze the addition of adenosine monophosphate (AMP) or uridine monophosphate (UMP) to a protein, resulting in modifications known as AMPylation and UMPylation. The sequence is that of Protein nucleotidyltransferase YdiU from Burkholderia multivorans (strain ATCC 17616 / 249).